The primary structure comprises 288 residues: Probable ketoamine kinase VP1481 (288 aa).

An ATP-binding site is contributed by 92 to 94 (NYL). Aspartate 195 (proton acceptor) is an active-site residue.

This sequence belongs to the fructosamine kinase family.

Functionally, ketoamine kinase that phosphorylates ketoamines on the third carbon of the sugar moiety to generate ketoamine 3-phosphate. The protein is Probable ketoamine kinase VP1481 of Vibrio parahaemolyticus serotype O3:K6 (strain RIMD 2210633).